Here is a 272-residue protein sequence, read N- to C-terminus: Putative pyruvate, phosphate dikinase regulatory protein 1 (272 aa).

151–158 (GISRTSKT) is an ADP binding site.

The protein belongs to the pyruvate, phosphate/water dikinase regulatory protein family. PDRP subfamily.

It carries out the reaction N(tele)-phospho-L-histidyl/L-threonyl-[pyruvate, phosphate dikinase] + ADP = N(tele)-phospho-L-histidyl/O-phospho-L-threonyl-[pyruvate, phosphate dikinase] + AMP + H(+). The enzyme catalyses N(tele)-phospho-L-histidyl/O-phospho-L-threonyl-[pyruvate, phosphate dikinase] + phosphate + H(+) = N(tele)-phospho-L-histidyl/L-threonyl-[pyruvate, phosphate dikinase] + diphosphate. Bifunctional serine/threonine kinase and phosphorylase involved in the regulation of the pyruvate, phosphate dikinase (PPDK) by catalyzing its phosphorylation/dephosphorylation. In Staphylococcus epidermidis (strain ATCC 35984 / DSM 28319 / BCRC 17069 / CCUG 31568 / BM 3577 / RP62A), this protein is Putative pyruvate, phosphate dikinase regulatory protein 1.